Consider the following 60-residue polypeptide: Chromatin protein Cren7 (60 aa).

Belongs to the Cren7 family. As to quaternary structure, monomer. Methylated at multiple sites, to varying extents.

The protein resides in the chromosome. It localises to the cytoplasm. Functionally, a chromatin protein, binds double-stranded DNA without sequence specificity. Constrains negative DNA supercoils. The polypeptide is Chromatin protein Cren7 (Saccharolobus islandicus (strain M.16.4 / Kamchatka #3) (Sulfolobus islandicus)).